A 143-amino-acid chain; its full sequence is MTLERTLSIIKPDAVGNNHIGEIIARFEKAGLRIVAAKMKQLDRKDAEGFYAVHKGRPFFEDLVGFMTTGPVMIMVLEGENAINKNREIMGATDPKKAAPGTIRADFAQTIDENAVHGSDAAETAKTEIEYFFKSQDVCARKR.

ATP is bound by residues lysine 11, phenylalanine 59, arginine 87, threonine 93, arginine 104, and asparagine 114. The active-site Pros-phosphohistidine intermediate is histidine 117.

It belongs to the NDK family. Homotetramer. Mg(2+) serves as cofactor.

The protein resides in the cytoplasm. The catalysed reaction is a 2'-deoxyribonucleoside 5'-diphosphate + ATP = a 2'-deoxyribonucleoside 5'-triphosphate + ADP. It carries out the reaction a ribonucleoside 5'-diphosphate + ATP = a ribonucleoside 5'-triphosphate + ADP. Major role in the synthesis of nucleoside triphosphates other than ATP. The ATP gamma phosphate is transferred to the NDP beta phosphate via a ping-pong mechanism, using a phosphorylated active-site intermediate. The chain is Nucleoside diphosphate kinase 2 from Protochlamydia amoebophila (strain UWE25).